Reading from the N-terminus, the 308-residue chain is Reticulon-like protein 1 (308 aa).

Polar residues-rich tracts occupy residues 1–17 and 41–66; these read MSEQ…SVTA and PSTE…IQNI. Disordered regions lie at residues 1 to 22 and 41 to 92; these read MSEQ…DVAA and PSTE…CPVS. N-linked (GlcNAc...) asparagine glycosylation occurs at asparagine 65. Over residues 67-81 the composition is skewed to low complexity; sequence SSSSSEPHHTSQSTP. N-linked (GlcNAc...) asparagine glycosylation is found at asparagine 113 and asparagine 135. Residues 127-308 form the Reticulon domain; the sequence is LWSVLTWKNT…TETINTTVNK (182 aa). The next 4 membrane-spanning stretches (helical) occupy residues 138 to 158, 166 to 186, 233 to 253, and 255 to 275; these read CSFS…WINL, FRYV…ASNG, PILT…SGFL, and YKSL…LYVC. Asparagine 303 carries an N-linked (GlcNAc...) asparagine glycan.

In terms of assembly, interacts with TTS1 and YOP1.

The protein localises to the endoplasmic reticulum membrane. It localises to the nucleus membrane. In terms of biological role, required for the correct positioning of the cellular division plane by delimiting the actomyosin ring assembly at the cell equator. Overexpression causes cell lysis. The protein is Reticulon-like protein 1 (rtn1) of Schizosaccharomyces pombe (strain 972 / ATCC 24843) (Fission yeast).